The chain runs to 436 residues: GTPase Der (436 aa).

EngA-type G domains follow at residues 4-167 (PVIA…PKIE) and 176-351 (IRFS…ESHS). GTP-binding positions include 10-17 (GRPNVGKS), 57-61 (DTGGI), 119-122 (NKVD), 182-189 (GRPNVGKS), 229-233 (DTAGM), and 294-297 (NKWD). One can recognise a KH-like domain in the interval 352-436 (IRVQTNVLND…PIHIIARARD (85 aa)).

This sequence belongs to the TRAFAC class TrmE-Era-EngA-EngB-Septin-like GTPase superfamily. EngA (Der) GTPase family. Associates with the 50S ribosomal subunit.

Its function is as follows. GTPase that plays an essential role in the late steps of ribosome biogenesis. This chain is GTPase Der, found in Bacillus cereus (strain G9842).